A 149-amino-acid polypeptide reads, in one-letter code: D-aminoacyl-tRNA deacylase (149 aa).

A Gly-cisPro motif, important for rejection of L-amino acids motif is present at residues Gly137–Pro138.

This sequence belongs to the DTD family. As to quaternary structure, homodimer.

Its subcellular location is the cytoplasm. It carries out the reaction glycyl-tRNA(Ala) + H2O = tRNA(Ala) + glycine + H(+). The enzyme catalyses a D-aminoacyl-tRNA + H2O = a tRNA + a D-alpha-amino acid + H(+). Its function is as follows. An aminoacyl-tRNA editing enzyme that deacylates mischarged D-aminoacyl-tRNAs. Also deacylates mischarged glycyl-tRNA(Ala), protecting cells against glycine mischarging by AlaRS. Acts via tRNA-based rather than protein-based catalysis; rejects L-amino acids rather than detecting D-amino acids in the active site. By recycling D-aminoacyl-tRNA to D-amino acids and free tRNA molecules, this enzyme counteracts the toxicity associated with the formation of D-aminoacyl-tRNA entities in vivo and helps enforce protein L-homochirality. The polypeptide is D-aminoacyl-tRNA deacylase (Desulfotalea psychrophila (strain LSv54 / DSM 12343)).